The primary structure comprises 454 residues: F-box/WD repeat-containing protein 2 (454 aa).

An F-box domain is found at 54–101 (RDFLKLLPLELSFYLLKWLDPQTLLTCCLVSKQWNKVISACTEVWQTA). 4 WD repeats span residues 146-183 (GHSARVYALYYKDGLLCTGSDDLSAKLWDVSTGQCVYG), 185-221 (QTHTCAAVKFDEQKLVTGSFDNTVACWEWSSGARTQH), 224-265 (GHTG…NTLT), and 276-314 (LQQCKVKSLLHSPGDYILLSADKYEIKIWPIGREINCKC). At lysine 298 the chain carries N6-acetyllysine.

In terms of assembly, directly interacts with SKP1 and CUL1.

In terms of biological role, substrate-recognition component of the SCF (SKP1-CUL1-F-box protein)-type E3 ubiquitin ligase complex. This is F-box/WD repeat-containing protein 2 from Rattus norvegicus (Rat).